The chain runs to 212 residues: Large ribosomal subunit protein uL3 (212 aa).

The segment at 119-147 (YQGNIKRWGQSRGPETHGSRYHRIPGSMG) is disordered.

It belongs to the universal ribosomal protein uL3 family. In terms of assembly, part of the 50S ribosomal subunit. Forms a cluster with proteins L14 and L19.

In terms of biological role, one of the primary rRNA binding proteins, it binds directly near the 3'-end of the 23S rRNA, where it nucleates assembly of the 50S subunit. This Lactobacillus acidophilus (strain ATCC 700396 / NCK56 / N2 / NCFM) protein is Large ribosomal subunit protein uL3.